The sequence spans 431 residues: Histidinol dehydrogenase 1 (431 aa).

Tyr127, Gln188, and Asn211 together coordinate NAD(+). The substrate site is built by Ser234, Gln256, and His259. Residues Gln256 and His259 each contribute to the Zn(2+) site. Residues Glu324 and His325 each act as proton acceptor in the active site. Substrate is bound by residues His325, Asp358, Glu412, and His417. A Zn(2+)-binding site is contributed by Asp358. His417 contributes to the Zn(2+) binding site.

The protein belongs to the histidinol dehydrogenase family. Requires Zn(2+) as cofactor.

The catalysed reaction is L-histidinol + 2 NAD(+) + H2O = L-histidine + 2 NADH + 3 H(+). The protein operates within amino-acid biosynthesis; L-histidine biosynthesis; L-histidine from 5-phospho-alpha-D-ribose 1-diphosphate: step 9/9. Functionally, catalyzes the sequential NAD-dependent oxidations of L-histidinol to L-histidinaldehyde and then to L-histidine. The sequence is that of Histidinol dehydrogenase 1 from Trichormus variabilis (strain ATCC 29413 / PCC 7937) (Anabaena variabilis).